A 236-amino-acid polypeptide reads, in one-letter code: CD81 antigen (236 aa).

The Cytoplasmic portion of the chain corresponds to methionine 1–tyrosine 12. A helical transmembrane segment spans residues leucine 13–leucine 33. Residues tryptophan 34–tyrosine 63 lie on the Extracellular side of the membrane. A helical transmembrane segment spans residues isoleucine 64–isoleucine 84. Topologically, residues glutamine 85–cysteine 89 are cytoplasmic. Residues leucine 90–glycine 112 traverse the membrane as a helical segment. Residues phenylalanine 113–lysine 201 are Extracellular-facing. 2 cysteine pairs are disulfide-bonded: cysteine 156-cysteine 190 and cysteine 157-cysteine 175. The helical transmembrane segment at leucine 202 to methionine 224 threads the bilayer. Cholesterol is bound at residue glutamate 219. The Cytoplasmic segment spans residues valine 225–tyrosine 236.

The protein belongs to the tetraspanin (TM4SF) family. Homodimer. Part of a complex composed of CD19, CR2/CD21, CD81 and IFITM1/CD225 in the membrane of mature B cells. Interacts (via the second extracellular domain) with CD19; this interaction is initiated early during biosynthesis in the ER and enables trafficking of only properly folded CD19. Part of a complex that includes MHC class II/HLA-DR molecules and IFITM1. Interacts with IFITM1. Interacts with IFITM2 and IFITM3. Part of integrin-tetraspanin complex composed of CD9, CD81, beta-1 and beta-2 integrins in the membrane of monocyte/macrophages. Interacts (via the second extracellular domain) with integrin ITGAV:ITGB3. Interacts with CD247/CD3 zeta, ICAM1 and CD9 at the immune synapse on T cell membrane. Part of a GPCR-tetraspanin complex consisting at least of ADGRG1, CD81, possibly CD9, and GNA11 in which CD81 enhances the association of ADGRG1 with GNA11. Part of a complex composed of CD9, CD81, PTGFRN and IGSF8. Interacts directly with IGSF8. Interacts with CD53 and SCIMP. Interacts with SAMHD1 (via its C-terminus). Interacts with glypican GPC3 and with the transcriptional repressor HHEX; binding to GPC3 decreases the availability of free CD81 for binding to HHEX, resulting in nuclear translocation of HHEX and transcriptional repression. Interacts with CLDN1. Interacts with CLDN6 and CLDN9. Post-translationally, not glycosylated. In terms of processing, likely constitutively palmitoylated at low levels. Protein palmitoylation is up-regulated upon coligation of BCR and CD9-C2R-CD81 complexes in lipid rafts.

The protein localises to the cell membrane. It is found in the basolateral cell membrane. Structural component of specialized membrane microdomains known as tetraspanin-enriched microdomains (TERMs), which act as platforms for receptor clustering and signaling. Essential for trafficking and compartmentalization of CD19 receptor on the surface of activated B cells. Upon initial encounter with microbial pathogens, enables the assembly of CD19-CR2/CD21 and B cell receptor (BCR) complexes at signaling TERMs, lowering the threshold dose of antigen required to trigger B cell clonal expansion and antibody production. In T cells, facilitates the localization of CD247/CD3 zeta at antigen-induced synapses with B cells, providing for costimulation and polarization toward T helper type 2 phenotype. Present in MHC class II compartments, may also play a role in antigen presentation. Can act both as positive and negative regulator of homotypic or heterotypic cell-cell fusion processes. Positively regulates sperm-egg fusion and may be involved in acrosome reaction. In myoblasts, associates with CD9 and PTGFRN and inhibits myotube fusion during muscle regeneration. In macrophages, associates with CD9 and beta-1 and beta-2 integrins, and prevents macrophage fusion into multinucleated giant cells specialized in ingesting complement-opsonized large particles. Also prevents the fusion of mononuclear cell progenitors into osteoclasts in charge of bone resorption. May regulate the compartmentalization of enzymatic activities. In T cells, defines the subcellular localization of dNTPase SAMHD1 and permits its degradation by the proteasome, thereby controlling intracellular dNTP levels. Also involved in cell adhesion and motility. Positively regulates integrin-mediated adhesion of macrophages, particularly relevant for the inflammatory response in the lung. This is CD81 antigen (Cd81) from Rattus norvegicus (Rat).